The following is a 222-amino-acid chain: MDPSEYFAGGNPSDQQNQKRQLQICGPRPSPLSVHKDSHKIKKPPKHPAPPPNRDQPPPYIPREPVVIYAVSPKVVHATASEFMNVVQRLTGISSGVFLESGGGGDVSPAARLASTENASPRGGKEPAARDETVEINTAMEEAAEFGGYAPGILSPSPALLPTASTGIFSPMYHQGGMFSPAIPLGLFSPAGFMSPFRSPGFTSLVASPTFADFFSHIWDQD.

The tract at residues Met1–Ile61 is disordered. The span at Pro12 to Gln21 shows a compositional bias: polar residues. Position 30 is a phosphoserine (Ser30). The span at Asp37 to Lys46 shows a compositional bias: basic residues. The span at His47–Ile61 shows a compositional bias: pro residues. Ser72 carries the phosphoserine modification. The short motif at Phe83–Gly92 is the VQ element. Residues Gly105–Arg130 are disordered. Phosphoserine occurs at positions 108 and 120.

As to quaternary structure, interacts with MPK4, WRKY25 and WRKY33. In terms of processing, phosphorylated on serine residue by MPK4.

It is found in the nucleus. Its function is as follows. Regulator of plant defense response. May contribute to MPK4-regulated defense activation by coupling the kinase to specific WRKY transcription factors. In Arabidopsis thaliana (Mouse-ear cress), this protein is Protein MKS1 (MKS1).